The sequence spans 379 residues: Cytochrome b (379 aa).

4 consecutive transmembrane segments (helical) span residues 33–53 (FGSL…FLAM), 77–98 (WLIR…YLHI), 113–133 (WNIG…GYVL), and 178–198 (FFAF…LHLL). Heme b contacts are provided by His-83 and His-97. His-182 and His-196 together coordinate heme b. Residue His-201 participates in a ubiquinone binding. Transmembrane regions (helical) follow at residues 226–246 (YKDL…ALFY), 288–308 (LGGV…PILH), 320–340 (ISQL…WIGG), and 347–367 (YIII…VLNP).

Belongs to the cytochrome b family. As to quaternary structure, the cytochrome bc1 complex contains 3 respiratory subunits (MT-CYB, CYC1 and UQCRFS1), 2 core proteins (UQCRC1 and UQCRC2) and probably 6 low-molecular weight proteins. Requires heme b as cofactor.

It is found in the mitochondrion inner membrane. Component of the ubiquinol-cytochrome c reductase complex (complex III or cytochrome b-c1 complex) that is part of the mitochondrial respiratory chain. The b-c1 complex mediates electron transfer from ubiquinol to cytochrome c. Contributes to the generation of a proton gradient across the mitochondrial membrane that is then used for ATP synthesis. The sequence is that of Cytochrome b (mt-cyb) from Anguilla mossambica (African longfin eel).